The sequence spans 459 residues: Bifunctional protein GlmU (459 aa).

Residues 1 to 229 (MTNYAIILAA…FDESLGVNDR (229 aa)) form a pyrophosphorylase region. UDP-N-acetyl-alpha-D-glucosamine contacts are provided by residues 8–11 (LAAG), Lys-22, Gln-72, and 77–78 (GT). Asp-102 is a Mg(2+) binding site. The UDP-N-acetyl-alpha-D-glucosamine site is built by Gly-139, Glu-154, Asn-169, and Asn-227. Asn-227 is a binding site for Mg(2+). Residues 230 to 250 (VALATAESVMRRRINQKHMVN) form a linker region. Residues 251 to 459 (GVSFVNPDAT…KRLPHHPQNK (209 aa)) are N-acetyltransferase. UDP-N-acetyl-alpha-D-glucosamine contacts are provided by Arg-332 and Lys-350. The active-site Proton acceptor is His-362. Residues Tyr-365 and Asn-376 each contribute to the UDP-N-acetyl-alpha-D-glucosamine site. Acetyl-CoA-binding positions include Ala-379, 385–386 (NY), Ser-404, Ala-422, and Arg-439.

The protein in the N-terminal section; belongs to the N-acetylglucosamine-1-phosphate uridyltransferase family. It in the C-terminal section; belongs to the transferase hexapeptide repeat family. In terms of assembly, homotrimer. Mg(2+) serves as cofactor.

Its subcellular location is the cytoplasm. It carries out the reaction alpha-D-glucosamine 1-phosphate + acetyl-CoA = N-acetyl-alpha-D-glucosamine 1-phosphate + CoA + H(+). The catalysed reaction is N-acetyl-alpha-D-glucosamine 1-phosphate + UTP + H(+) = UDP-N-acetyl-alpha-D-glucosamine + diphosphate. It functions in the pathway nucleotide-sugar biosynthesis; UDP-N-acetyl-alpha-D-glucosamine biosynthesis; N-acetyl-alpha-D-glucosamine 1-phosphate from alpha-D-glucosamine 6-phosphate (route II): step 2/2. The protein operates within nucleotide-sugar biosynthesis; UDP-N-acetyl-alpha-D-glucosamine biosynthesis; UDP-N-acetyl-alpha-D-glucosamine from N-acetyl-alpha-D-glucosamine 1-phosphate: step 1/1. Its pathway is bacterial outer membrane biogenesis; LPS lipid A biosynthesis. Functionally, catalyzes the last two sequential reactions in the de novo biosynthetic pathway for UDP-N-acetylglucosamine (UDP-GlcNAc). The C-terminal domain catalyzes the transfer of acetyl group from acetyl coenzyme A to glucosamine-1-phosphate (GlcN-1-P) to produce N-acetylglucosamine-1-phosphate (GlcNAc-1-P), which is converted into UDP-GlcNAc by the transfer of uridine 5-monophosphate (from uridine 5-triphosphate), a reaction catalyzed by the N-terminal domain. This is Bifunctional protein GlmU from Streptococcus gordonii (strain Challis / ATCC 35105 / BCRC 15272 / CH1 / DL1 / V288).